A 716-amino-acid polypeptide reads, in one-letter code: Exocyst complex component 8 (716 aa).

Serine 15 is subject to Phosphoserine. The tract at residues 129–150 (GFLPGPAGVPREGSGTGEEGKQ) is disordered. The PH domain maps to 173-273 (YLVYNGDLVE…WLEVLEETKR (101 aa)). Residues 275–284 (LSDKRRREQE) are compositionally biased toward basic and acidic residues. The interval 275 to 319 (LSDKRRREQEEAAAPRAPPPVTSKGSNPFEDEDDEELATPEAEEE) is disordered. Residues 303–319 (FEDEDDEELATPEAEEE) are compositionally biased toward acidic residues. Position 313 is a phosphothreonine (threonine 313).

Belongs to the EXO84 family. The exocyst complex is composed of EXOC1, EXOC2, EXOC3, EXOC4, EXOC5, EXOC6, EXOC7 and EXOC8. Interacts (via PH domain) with GTP-bound RALA and RALB. Interacts with SH3BP1; required for the localization of both SH3BP1 and the exocyst to the leading edge of migrating cells.

Its subcellular location is the cytoplasm. The protein localises to the perinuclear region. The protein resides in the cell projection. It localises to the growth cone. Component of the exocyst complex involved in the docking of exocytic vesicles with fusion sites on the plasma membrane. This is Exocyst complex component 8 (Exoc8) from Mus musculus (Mouse).